The following is a 275-amino-acid chain: Glutamate racemase (275 aa).

Residues 12–13 (DS) and 44–45 (YG) each bind substrate. Catalysis depends on Cys-75, which acts as the Proton donor/acceptor. 76–77 (NT) lines the substrate pocket. The Proton donor/acceptor role is filled by Cys-185. 186 to 187 (TH) is a binding site for substrate.

This sequence belongs to the aspartate/glutamate racemases family.

The enzyme catalyses L-glutamate = D-glutamate. Its pathway is cell wall biogenesis; peptidoglycan biosynthesis. In terms of biological role, provides the (R)-glutamate required for cell wall biosynthesis. The sequence is that of Glutamate racemase from Mycobacterium avium (strain 104).